Reading from the N-terminus, the 356-residue chain is Guanine nucleotide-binding protein alpha-15 subunit (356 aa).

Glycine 2 is lipidated: N-myristoyl glycine. Residue cysteine 5 is the site of S-palmitoyl cysteine attachment. The region spanning 33-356 (GNQKLLLLGT…GRNLRGTGME (324 aa)) is the G-alpha domain. Residues 36 to 49 (KLLLLGTGECGKST) form a G1 motif region. GTP is bound by residues 41–48 (GTGECGKS), 177–183 (LRIRIPT), 202–206 (DVGGQ), 271–274 (NKRD), and alanine 328. 2 residues coordinate Mg(2+): serine 48 and threonine 183. The G2 motif stretch occupies residues 175–183 (DMLRIRIPT). Residues 198–207 (FRIFDVGGQR) are G3 motif. Residues 267 to 274 (ILFLNKRD) form a G4 motif region. The segment at 326 to 331 (TCATDT) is G5 motif.

Belongs to the G-alpha family. In terms of assembly, g proteins are composed of 3 units; alpha, beta and gamma. The alpha chain contains the guanine nucleotide binding site.

Guanine nucleotide-binding proteins (G proteins) are involved as modulators or transducers in various transmembrane signaling systems. This is Guanine nucleotide-binding protein alpha-15 subunit (gpa-15) from Caenorhabditis briggsae.